The primary structure comprises 391 residues: NADH-quinone oxidoreductase subunit D (391 aa).

Belongs to the complex I 49 kDa subunit family. In terms of assembly, NDH-1 is composed of 14 different subunits. Subunits NuoB, C, D, E, F, and G constitute the peripheral sector of the complex.

The protein resides in the cell inner membrane. The catalysed reaction is a quinone + NADH + 5 H(+)(in) = a quinol + NAD(+) + 4 H(+)(out). In terms of biological role, NDH-1 shuttles electrons from NADH, via FMN and iron-sulfur (Fe-S) centers, to quinones in the respiratory chain. The immediate electron acceptor for the enzyme in this species is believed to be ubiquinone. Couples the redox reaction to proton translocation (for every two electrons transferred, four hydrogen ions are translocated across the cytoplasmic membrane), and thus conserves the redox energy in a proton gradient. This is NADH-quinone oxidoreductase subunit D from Rickettsia rickettsii (strain Sheila Smith).